Consider the following 130-residue polypeptide: Small ribosomal subunit protein uS9 (130 aa).

It belongs to the universal ribosomal protein uS9 family.

The chain is Small ribosomal subunit protein uS9 from Syntrophobacter fumaroxidans (strain DSM 10017 / MPOB).